Here is a 508-residue protein sequence, read N- to C-terminus: Flagellin (508 aa).

Belongs to the bacterial flagellin family.

The protein localises to the secreted. Its subcellular location is the bacterial flagellum. Functionally, flagellin is the subunit protein which polymerizes to form the filaments of bacterial flagella. This is Flagellin (fliC) from Salmonella berta.